The sequence spans 161 residues: Dihydrofolate reductase (161 aa).

Positions Thr2–Arg157 constitute a DHFR domain. Ile6 to Ala8 serves as a coordination point for substrate. NADP(+) contacts are provided by residues Val7–Ala8 and Ile15–Gln20. Asp28 contacts substrate. Gly44–Thr47 lines the NADP(+) pocket. Residue Arg58 participates in substrate binding. NADP(+) is bound by residues Leu63–Gln66 and Phe93–Leu98. Thr112 is a substrate binding site.

The protein belongs to the dihydrofolate reductase family.

The catalysed reaction is (6S)-5,6,7,8-tetrahydrofolate + NADP(+) = 7,8-dihydrofolate + NADPH + H(+). It functions in the pathway cofactor biosynthesis; tetrahydrofolate biosynthesis; 5,6,7,8-tetrahydrofolate from 7,8-dihydrofolate: step 1/1. In terms of biological role, key enzyme in folate metabolism. Catalyzes an essential reaction for de novo glycine and purine synthesis, and for DNA precursor synthesis. This chain is Dihydrofolate reductase (folA), found in Staphylococcus epidermidis.